Reading from the N-terminus, the 380-residue chain is Cytochrome b (380 aa).

4 consecutive transmembrane segments (helical) span residues 34-54, 78-99, 114-134, and 179-199; these read FGSL…LLAM, WLIR…YMHI, WNTG…GYVL, and FFAL…IHLT. Positions 84 and 98 each coordinate heme b. Residues histidine 183 and histidine 197 each coordinate heme b. Histidine 202 contributes to the a ubiquinone binding site. 4 helical membrane-spanning segments follow: residues 227 to 247, 289 to 309, 321 to 341, and 348 to 368; these read LKDI…ALFS, LGGV…PLLH, LSQL…WIGS, and FIII…ILFP.

This sequence belongs to the cytochrome b family. In terms of assembly, the cytochrome bc1 complex contains 11 subunits: 3 respiratory subunits (MT-CYB, CYC1 and UQCRFS1), 2 core proteins (UQCRC1 and UQCRC2) and 6 low-molecular weight proteins (UQCRH/QCR6, UQCRB/QCR7, UQCRQ/QCR8, UQCR10/QCR9, UQCR11/QCR10 and a cleavage product of UQCRFS1). This cytochrome bc1 complex then forms a dimer. Heme b is required as a cofactor.

It is found in the mitochondrion inner membrane. Component of the ubiquinol-cytochrome c reductase complex (complex III or cytochrome b-c1 complex) that is part of the mitochondrial respiratory chain. The b-c1 complex mediates electron transfer from ubiquinol to cytochrome c. Contributes to the generation of a proton gradient across the mitochondrial membrane that is then used for ATP synthesis. In Oceanodroma furcata (Fork-tailed storm-petrel), this protein is Cytochrome b (MT-CYB).